The chain runs to 253 residues: MGQPLPPVALLLLVSASSRAADVPKALVLLDPPWASVLKDDHVTLKCQGLHPAGDNTTQWLHNGSLLSSQAPAYTITAARAEDGGEYRCQTGLSSLSDPVQLRVHLGWLVLQAPRWVFQEGEPIQLRCHSWKNNKLHKVTYLQNGRGLRYFHQNSDLHIPEATRNHSGSYFCRGLIRHHNVSSETVTITVQGPANPVVSSSVLPWHQIAFCLVMGLLLAADTGLYFSVQRDLRSSQRARKEHTLGWSLGSQDK.

The first 20 residues, 1-20 (MGQPLPPVALLLLVSASSRA), serve as a signal peptide directing secretion. Residues 21 to 207 (ADVPKALVLL…VSSSVLPWHQ (187 aa)) are Extracellular-facing. Ig-like C2-type domains are found at residues 24 to 105 (PKAL…LRVH) and 120 to 189 (EGEP…VTIT). Disulfide bonds link C47–C89 and C128–C172. Residues N56, N63, N165, and N180 are each glycosylated (N-linked (GlcNAc...) asparagine). The helical transmembrane segment at 208-226 (IAFCLVMGLLLAADTGLYF) threads the bilayer. Over 227-253 (SVQRDLRSSQRARKEHTLGWSLGSQDK) the chain is Cytoplasmic.

Forms a heterooligomeric complex with ITAM-containing signaling subunits FCER1G. Interacts (via transmembrane domain) with signaling subunits; this interaction is a prerequisite for receptor complex expression on the cell surface and intracellular signal transduction. Binds the Fc region of antigen-complexed IgG.

The protein localises to the cell membrane. Receptor for the invariable Fc fragment of immunoglobulin gamma (IgG). Optimally activated upon binding of clustered antigen-IgG complexes displayed on cell surfaces, triggers lysis of antibody-coated cells, a process known as antibody-dependent cellular cytotoxicity (ADCC). Does not bind free monomeric IgG, thus avoiding inappropriate effector cell activation in the absence of antigenic trigger. Mediates IgG effector functions on natural killer (NK) cells. Binds antigen-IgG complexes generated upon infection and triggers NK cell-dependent cytokine production and degranulation to limit viral load and propagation. Fc-binding subunit that associates with FCER1G adapters to form functional signaling complexes. Following the engagement of antigen-IgG complexes, triggers phosphorylation of immunoreceptor tyrosine-based activation motif (ITAM)-containing adapters with subsequent activation of phosphatidylinositol 3-kinase signaling and sustained elevation of intracellular calcium that ultimately drive NK cell activation. Mediates enhanced ADCC in response to afucosylated IgGs. This chain is Low affinity immunoglobulin gamma Fc region receptor III-B (FCGR3B), found in Oryctolagus cuniculus (Rabbit).